Reading from the N-terminus, the 193-residue chain is CASP-like protein 1F3 (193 aa).

The segment at 1–25 is disordered; sequence MASPQNTSQKRFFQANSPGGMPTAS. The Cytoplasmic segment spans residues 1-35; the sequence is MASPQNTSQKRFFQANSPGGMPTASQSQRSRILAQ. A helical membrane pass occupies residues 36-56; sequence ITLRFLAIAFTVTAIPVMITA. Over 57–78 the chain is Extracellular; the sequence is KEPVSLLGLAITPSYKQSSAMK. Residues 79–99 traverse the membrane as a helical segment; sequence FLLGVNATVFAFTALSMLFVW. Residues 100 to 118 lie on the Cytoplasmic side of the membrane; sequence PLRRSGSKPINYFFLHLHD. Residues 119–139 traverse the membrane as a helical segment; it reads MVMTLLLISGCAAATAVGYLS. Residues 140–161 lie on the Extracellular side of the membrane; it reads QYGQPETYWSPICDIVKKFCHQ. Residues 162-182 traverse the membrane as a helical segment; that stretch reads MLISTVLSYLAFFCYLALNIL. Topologically, residues 183 to 193 are cytoplasmic; sequence SVHKLMSRATE.

This sequence belongs to the Casparian strip membrane proteins (CASP) family. Homodimer and heterodimers.

The protein resides in the cell membrane. The chain is CASP-like protein 1F3 from Populus trichocarpa (Western balsam poplar).